Reading from the N-terminus, the 432-residue chain is Alpha-enolase (432 aa).

Ser40 contacts Mg(2+). Residues His158 and Glu167 each coordinate substrate. Glu210 acts as the Proton donor in catalysis. 3 residues coordinate Mg(2+): Asp245, Glu293, and Asp318. Residues Glu293 and Asp318 each contribute to the substrate site. The Proton acceptor role is filled by Lys343. Residues 370 to 373 (SHRS) and Lys394 contribute to the substrate site.

Belongs to the enolase family. In terms of assembly, dimer. The cofactor is Mg(2+).

It localises to the cytoplasm. The enzyme catalyses (2R)-2-phosphoglycerate = phosphoenolpyruvate + H2O. Its pathway is carbohydrate degradation; glycolysis; pyruvate from D-glyceraldehyde 3-phosphate: step 4/5. Functionally, multifunctional enzyme that, as well as its role in glycolysis, plays a part in various processes such as growth control, hypoxia tolerance and allergic responses. The chain is Alpha-enolase from Thunnus albacares (Yellowfin tuna).